Reading from the N-terminus, the 461-residue chain is Nuclear distribution protein PAC1 (461 aa).

Residues 64–93 adopt a coiled-coil conformation; the sequence is NSIIRLHRKILDLEQKCQQLTEELEAVPTE. 7 WD repeats span residues 118 to 157, 161 to 203, 209 to 252, 254 to 292, 318 to 362, 382 to 421, and 423 to 461; these read DVGASVTDIKLHPSLPIAFLATDQGKVVAYDLFNRSMPLH, AHMK…AFQL, SHEH…KSFQ, HNQWVRTLELHGDYVITGSNDATIRLSHWPSGNGLSMAV, DDQV…FIPH, GHTSWVRDIKVRGRHLFSCSDDRSIRCWDLVTGQCLKVWP, and ASHGFINCLSVDSDVSNDKLLRELFLSGSIDGKCNVFMR.

It belongs to the WD repeat LIS1/nudF family. In terms of assembly, self-associates. Interacts with NDL1 and dynein.

Its subcellular location is the cytoplasm. The protein resides in the cytoskeleton. It is found in the spindle pole. Positively regulates the activity of the minus-end directed microtubule motor protein dynein. Plays a central role in positioning the mitotic spindle at the bud neck during cell division. Targets cytoplasmic dynein to microtubule plus ends, thereby promoting dynein-mediated microtubule sliding along the bud cortex and consequently the movement of the mitotic spindle to the bud neck. The protein is Nuclear distribution protein PAC1 of Eremothecium gossypii (strain ATCC 10895 / CBS 109.51 / FGSC 9923 / NRRL Y-1056) (Yeast).